A 1202-amino-acid polypeptide reads, in one-letter code: MMCEVMPTISEAEGPPGGGGGHGSGSPSQPDADSHFEQLMVSMLEERDRLLDTLRETQETLALTQGKLHEVGHERDSLQRQLNTALPQEFAALTKELNVCREQLLEREEEIAELKAERNNTRLLLEHLECLVSRHERSLRMTVVKRQAQSPAGVSSEVEVLKALKSLFEHHKALDEKVRERLRVALERCSLLEEELGATHKELMILKEQNNQKKTLTDGVLDINHEQENTPSTSGKRSSDGSLSHEEDLAKVIELQEIISKQSREQSQMKERLASLSSHVTELEEDLDTARKDLIKSEEMNTKLQRDVREAMAQKEDMEERITTLEKRYLAAQREATSVHDLNDKLENEIANKDSMHRQTEDKNRQLQERLELAEQKLQQTLRKAETLPEVEAELAQRVAALSKAEERHGNIEERLRQMEAQLEEKNQELQRARQREKMNEEHNKRLSDTVDKLLSESNERLQLHLKERMAALEDKNSLLREVESAKKQLEETQHDKDQLVLNIEALRAELDHMRLRGASLHHGRPHLGSVPDFRFPMADGHTDSYSTSAVLRRPQKGRLAALRDEPSKVQTLNEQDWERAQQASVLANVAQAFESDADVSDGEDDRDTLLSSVDLLSPSGQADAHTLAMMLQEQLDAINKEIRLIQEEKENTEQRAEEIESRVGSGSLDNLGRFRSMSSIPPYPASSLASSSPPGSGRSTPRRIPHSPAREVDRLGVMTLLPPSREEVRDDKTTIKCETSPPSSPRALRLDRLHKGALHTVSHEDIRDIRNSTGSQDGPVSNPSSSNSSQDSLHKAPKKKGIKSSIGRLFGKKEKGRPGQTGKEALGQAGVSETDNSSQDALGLSKLGGQAEKNRKLQKKHELLEEARRQGLPFAQWDGPTVVVWLELWVGMPAWYVAACRANVKSGAIMSALSDTEIQREIGISNPLHRLKLRLAIQEIMSLTSPSAPPTSRTTLAYGDMNHEWIGNEWLPSLGLPQYRSYFMECLVDARMLDHLTKKDLRGQLKMVDSFHRNSFQCGIMCLRRLNYDRKELERKREESQSEIKDVLVWSNDRVIRWILSIGLKEYANNLIESGVHGALLALDETFDFSALALLLQIPTQNTQARAVLEREFNNLLVMGTDRRFDEDDDKSFRRAPSWRKKFRPKDIRGLAAGSAETLPANFRVTSSMSSPSMQPKKMQMDGNVSGTQRLDSATVRTYSC.

A disordered region spans residues 1-33; that stretch reads MMCEVMPTISEAEGPPGGGGGHGSGSPSQPDAD. Positions 15–24 are enriched in gly residues; the sequence is PPGGGGGHGS. A coiled-coil region spans residues 34-141; the sequence is SHFEQLMVSM…VSRHERSLRM (108 aa). At serine 150 the chain carries Phosphoserine. Residues 176–214 adopt a coiled-coil conformation; the sequence is EKVRERLRVALERCSLLEEELGATHKELMILKEQNNQKK. Disordered stretches follow at residues 224–245 and 426–446; these read NHEQ…SLSH and KNQE…HNKR. At threonine 230 the chain carries Phosphothreonine. A phosphoserine mark is found at serine 239, serine 242, and serine 244. 2 coiled-coil regions span residues 249 to 521 and 623 to 669; these read LAKV…GASL and ADAH…SGSL. Serine 448 is modified (phosphoserine). The span at 651–662 shows a compositional bias: basic and acidic residues; it reads ENTEQRAEEIES. Residues 651–855 form a disordered region; that stretch reads ENTEQRAEEI…SKLGGQAEKN (205 aa). Phosphoserine occurs at positions 666, 668, and 693. Residues 686–700 show a composition bias toward low complexity; that stretch reads ASSLASSSPPGSGRS. The span at 725-736 shows a compositional bias: basic and acidic residues; that stretch reads SREEVRDDKTTI. Threonine 761 bears the Phosphothreonine mark. The span at 762-771 shows a compositional bias: basic and acidic residues; sequence VSHEDIRDIR. At serine 763 the chain carries Phosphoserine. The span at 832–841 shows a compositional bias: polar residues; sequence VSETDNSSQD. A coiled-coil region spans residues 847-871; sequence KLGGQAEKNRKLQKKHELLEEARRQ. 3 SAM domains span residues 878-944, 963-1027, and 1051-1120; these read WDGP…IMSL, NHEW…LRRL, and WSND…LLVM. Residues 1021 to 1050 are a coiled coil; it reads IMCLRRLNYDRKELERKREESQSEIKDVLV. Serine 1133 is modified (phosphoserine). At threonine 1159 the chain carries Phosphothreonine. Residues 1163–1202 form a disordered region; it reads NFRVTSSMSSPSMQPKKMQMDGNVSGTQRLDSATVRTYSC. The segment covering 1168 to 1179 has biased composition (low complexity); the sequence is SSMSSPSMQPKK. The span at 1184-1202 shows a compositional bias: polar residues; the sequence is GNVSGTQRLDSATVRTYSC.

This sequence belongs to the liprin family. Liprin-alpha subfamily. As to quaternary structure, homodimer. Interacts with PTPRF (via D2 domain). Part of a cortical microtubule stabilization complex (CMSC) composed of KANK1, PPFIA1, PPFIBP1, ERC1/ELKS, PHLDB2/LL5beta, CLASPs, KIF21A and possibly additional interactors; within CMSCs KANK1 and PHLDB2/LL5beta seem to be the core components for recruiting microtubule-binding proteins KIF21A and CLASPs, whereas PPFIA1, PPFIBP1 and ERC1/ELKS serve as scaffolds for protein clustering. As to expression, ubiquitous.

The protein resides in the cytoplasm. It localises to the cell cortex. Functionally, may regulate the disassembly of focal adhesions. May localize receptor-like tyrosine phosphatases type 2A at specific sites on the plasma membrane, possibly regulating their interaction with the extracellular environment and their association with substrates. This is Liprin-alpha-1 (PPFIA1) from Homo sapiens (Human).